A 453-amino-acid polypeptide reads, in one-letter code: UDP-glucose 6-dehydrogenase (453 aa).

NAD(+)-binding positions include 2–19, valine 11, threonine 121, and glutamate 158; that span reads RLCVIGAGYVGLVTAACF. Substrate contacts are provided by residues 154-158, lysine 210, asparagine 214, 255-259, and glycine 263; these read EFLKE and FIYAG. Residue cysteine 266 is the Nucleophile of the active site. An NAD(+)-binding site is contributed by lysine 269. Lysine 327 contacts substrate. NAD(+) is bound at residue arginine 334.

The protein belongs to the UDP-glucose/GDP-mannose dehydrogenase family.

It carries out the reaction UDP-alpha-D-glucose + 2 NAD(+) + H2O = UDP-alpha-D-glucuronate + 2 NADH + 3 H(+). Its pathway is nucleotide-sugar biosynthesis; UDP-alpha-D-glucuronate biosynthesis; UDP-alpha-D-glucuronate from UDP-alpha-D-glucose: step 1/1. It functions in the pathway bacterial outer membrane biogenesis; lipopolysaccharide biosynthesis. In Pseudomonas aeruginosa (strain ATCC 15692 / DSM 22644 / CIP 104116 / JCM 14847 / LMG 12228 / 1C / PRS 101 / PAO1), this protein is UDP-glucose 6-dehydrogenase (udg).